The chain runs to 283 residues: MTSTRGEAAGIPSVSLNDGHSIPVLGLGVGELSEAEAERSVAAALEAGYRLIDTAAVYGNEAAVGRAVNASGIPREEIYVTTKLAVADQGFGTSQDAARASLERLGLDYVDLYLIHWPAGDHGKYIDSWGGLMKAKQDGVARSIGVCNFNAEHLSNIIDLSFFTPAINQIELHPLLNQAELREVNAGYGIVTEAYGPLGVGRLLDHAAVTGVAQAHGKTPAQVLLRWSIQLGNVVIARSANPDRITSNLEVFDFELTDDEMATLNGLDEGTRFRPDPETYTGP.

Tyrosine 58 (proton donor) is an active-site residue. Positions 196, 198, 200, 236, 238, 239, 240, 244, 247, 248, and 274 each coordinate NADPH.

This sequence belongs to the aldo/keto reductase family.

In Mycobacterium sp. (strain MCS), this protein is Aldo-keto reductase Mmcs_1938.